The sequence spans 364 residues: UDP-N-acetylglucosamine--N-acetylmuramyl-(pentapeptide) pyrophosphoryl-undecaprenol N-acetylglucosamine transferase 1 (364 aa).

Residues 10-12 (TGG), N124, S195, I250, and Q295 contribute to the UDP-N-acetyl-alpha-D-glucosamine site.

It belongs to the glycosyltransferase 28 family. MurG subfamily.

The protein resides in the cell membrane. The catalysed reaction is di-trans,octa-cis-undecaprenyl diphospho-N-acetyl-alpha-D-muramoyl-L-alanyl-D-glutamyl-meso-2,6-diaminopimeloyl-D-alanyl-D-alanine + UDP-N-acetyl-alpha-D-glucosamine = di-trans,octa-cis-undecaprenyl diphospho-[N-acetyl-alpha-D-glucosaminyl-(1-&gt;4)]-N-acetyl-alpha-D-muramoyl-L-alanyl-D-glutamyl-meso-2,6-diaminopimeloyl-D-alanyl-D-alanine + UDP + H(+). It functions in the pathway cell wall biogenesis; peptidoglycan biosynthesis. In terms of biological role, cell wall formation. Catalyzes the transfer of a GlcNAc subunit on undecaprenyl-pyrophosphoryl-MurNAc-pentapeptide (lipid intermediate I) to form undecaprenyl-pyrophosphoryl-MurNAc-(pentapeptide)GlcNAc (lipid intermediate II). This is UDP-N-acetylglucosamine--N-acetylmuramyl-(pentapeptide) pyrophosphoryl-undecaprenol N-acetylglucosamine transferase 1 from Bacillus thuringiensis subsp. konkukian (strain 97-27).